We begin with the raw amino-acid sequence, 418 residues long: UDP-N-acetylglucosamine 1-carboxyvinyltransferase (418 aa).

22–23 (KN) lines the phosphoenolpyruvate pocket. Arg92 is a binding site for UDP-N-acetyl-alpha-D-glucosamine. Cys116 (proton donor) is an active-site residue. A 2-(S-cysteinyl)pyruvic acid O-phosphothioketal modification is found at Cys116. Residues Asp306 and Ile328 each contribute to the UDP-N-acetyl-alpha-D-glucosamine site.

It belongs to the EPSP synthase family. MurA subfamily.

Its subcellular location is the cytoplasm. It catalyses the reaction phosphoenolpyruvate + UDP-N-acetyl-alpha-D-glucosamine = UDP-N-acetyl-3-O-(1-carboxyvinyl)-alpha-D-glucosamine + phosphate. Its pathway is cell wall biogenesis; peptidoglycan biosynthesis. Its function is as follows. Cell wall formation. Adds enolpyruvyl to UDP-N-acetylglucosamine. This chain is UDP-N-acetylglucosamine 1-carboxyvinyltransferase, found in Solibacter usitatus (strain Ellin6076).